Here is a 246-residue protein sequence, read N- to C-terminus: Probable septum site-determining protein MinC (246 aa).

Residues 116–140 (AAVSPPPPPPARAEPAPPAARPAPG) are disordered. Residues 119–136 (SPPPPPPARAEPAPPAAR) are compositionally biased toward pro residues.

The protein belongs to the MinC family. In terms of assembly, interacts with MinD and FtsZ.

In terms of biological role, cell division inhibitor that blocks the formation of polar Z ring septums. Rapidly oscillates between the poles of the cell to destabilize FtsZ filaments that have formed before they mature into polar Z rings. Prevents FtsZ polymerization. In Xanthomonas oryzae pv. oryzae (strain MAFF 311018), this protein is Probable septum site-determining protein MinC.